A 691-amino-acid chain; its full sequence is Putative calcium up-regulated protein I (691 aa).

In terms of domain architecture, Ricin B-type lectin spans 47–174; sequence SNCYLKEKPQ…NYTSQIWTYN (128 aa).

It belongs to the cup family.

The polypeptide is Putative calcium up-regulated protein I (cupI) (Dictyostelium discoideum (Social amoeba)).